Here is a 280-residue protein sequence, read N- to C-terminus: Putative pyruvate, phosphate dikinase regulatory protein (280 aa).

149–156 (GVSRSSKT) contacts ADP.

The protein belongs to the pyruvate, phosphate/water dikinase regulatory protein family. PDRP subfamily.

It catalyses the reaction N(tele)-phospho-L-histidyl/L-threonyl-[pyruvate, phosphate dikinase] + ADP = N(tele)-phospho-L-histidyl/O-phospho-L-threonyl-[pyruvate, phosphate dikinase] + AMP + H(+). It carries out the reaction N(tele)-phospho-L-histidyl/O-phospho-L-threonyl-[pyruvate, phosphate dikinase] + phosphate + H(+) = N(tele)-phospho-L-histidyl/L-threonyl-[pyruvate, phosphate dikinase] + diphosphate. Functionally, bifunctional serine/threonine kinase and phosphorylase involved in the regulation of the pyruvate, phosphate dikinase (PPDK) by catalyzing its phosphorylation/dephosphorylation. The polypeptide is Putative pyruvate, phosphate dikinase regulatory protein (Novosphingobium aromaticivorans (strain ATCC 700278 / DSM 12444 / CCUG 56034 / CIP 105152 / NBRC 16084 / F199)).